Consider the following 461-residue polypeptide: Adenine DNA glycosylase (461 aa).

Glutamate 69 acts as the Proton donor/acceptor in catalysis. 4 residues coordinate [4Fe-4S] cluster: cysteine 226, cysteine 233, cysteine 236, and cysteine 242. The 142-residue stretch at glutamine 296–lysine 437 folds into the Nudix hydrolase domain. The Nudix box signature appears at phenylalanine 340–arginine 366.

The protein belongs to the Nth/MutY family. As to quaternary structure, monomer. Requires [4Fe-4S] cluster as cofactor.

The enzyme catalyses Hydrolyzes free adenine bases from 7,8-dihydro-8-oxoguanine:adenine mismatched double-stranded DNA, leaving an apurinic site.. Its function is as follows. Adenine glycosylase active on G-A mispairs. Has glycosylase and nicking activities and is active at A/G and A/GO sites. The polypeptide is Adenine DNA glycosylase (myh1) (Schizosaccharomyces pombe (strain 972 / ATCC 24843) (Fission yeast)).